The primary structure comprises 147 residues: Large ribosomal subunit protein uL13 (147 aa).

Belongs to the universal ribosomal protein uL13 family. Part of the 50S ribosomal subunit.

Its function is as follows. This protein is one of the early assembly proteins of the 50S ribosomal subunit, although it is not seen to bind rRNA by itself. It is important during the early stages of 50S assembly. The sequence is that of Large ribosomal subunit protein uL13 from Pseudothermotoga lettingae (strain ATCC BAA-301 / DSM 14385 / NBRC 107922 / TMO) (Thermotoga lettingae).